Reading from the N-terminus, the 382-residue chain is Galactokinase (382 aa).

Glutamate 34–aspartate 37 provides a ligand contact to substrate. ATP is bound at residue glycine 124–serine 130. Positions 130 and 162 each coordinate Mg(2+). Aspartate 174 (proton acceptor) is an active-site residue. Tyrosine 223 is a substrate binding site.

It belongs to the GHMP kinase family. GalK subfamily.

Its subcellular location is the cytoplasm. The enzyme catalyses alpha-D-galactose + ATP = alpha-D-galactose 1-phosphate + ADP + H(+). The protein operates within carbohydrate metabolism; galactose metabolism. Catalyzes the transfer of the gamma-phosphate of ATP to D-galactose to form alpha-D-galactose-1-phosphate (Gal-1-P). This chain is Galactokinase, found in Citrobacter koseri (strain ATCC BAA-895 / CDC 4225-83 / SGSC4696).